The primary structure comprises 197 residues: Recombination protein RecR (197 aa).

The segment at C57 to C72 adopts a C4-type zinc-finger fold. One can recognise a Toprim domain in the interval A79–P174.

This sequence belongs to the RecR family.

Functionally, may play a role in DNA repair. It seems to be involved in an RecBC-independent recombinational process of DNA repair. It may act with RecF and RecO. The sequence is that of Recombination protein RecR from Geotalea uraniireducens (strain Rf4) (Geobacter uraniireducens).